We begin with the raw amino-acid sequence, 384 residues long: GTPase Obg (384 aa).

Residues 1-159 form the Obg domain; it reads MKFIDEAKIE…RSLQLELKVL (159 aa). Disordered stretches follow at residues 20–46 and 129–149; these read ATSF…GSVW and HFKS…EGET. A compositionally biased stretch (gly residues) spans 33–43; sequence GPDGGDGGKGG. A compositionally biased stretch (polar residues) spans 130–143; the sequence is FKSSVNRAPKQSTP. The 189-residue stretch at 160-348 folds into the OBG-type G domain; the sequence is ADVGLLGMPN…LVHQINQYLA (189 aa). GTP contacts are provided by residues 166 to 173, 191 to 195, 213 to 216, 284 to 287, and 329 to 331; these read GMPNAGKS, FTTLH, DIPG, NKLD, and SAL. Mg(2+)-binding residues include S173 and T193.

The protein belongs to the TRAFAC class OBG-HflX-like GTPase superfamily. OBG GTPase family. In terms of assembly, monomer. The cofactor is Mg(2+).

It localises to the cytoplasm. Its function is as follows. An essential GTPase which binds GTP, GDP and possibly (p)ppGpp with moderate affinity, with high nucleotide exchange rates and a fairly low GTP hydrolysis rate; the half-life of the GTP-bound state is about 50 minutes. Plays a role in control of the cell cycle, stress response, ribosome biogenesis and in those bacteria that undergo differentiation, in morphogenesis control. The sequence is that of GTPase Obg from Neisseria gonorrhoeae (strain ATCC 700825 / FA 1090).